Consider the following 203-residue polypeptide: Holliday junction branch migration complex subunit RuvA (203 aa).

A domain I region spans residues 1-64 (MIGRLRGIIL…EDAQLLYGFN (64 aa)). A domain II region spans residues 65–142 (NKQERTLFKE…KGLHGDLFTP (78 aa)). The interval 143–154 (AADLVLTSPAGP) is flexible linker. The interval 155-203 (TADDAEQEAVAALVALGYKPQEASRMVSKIARPDANSETLIREALRAAL) is domain III.

The protein belongs to the RuvA family. Homotetramer. Forms an RuvA(8)-RuvB(12)-Holliday junction (HJ) complex. HJ DNA is sandwiched between 2 RuvA tetramers; dsDNA enters through RuvA and exits via RuvB. An RuvB hexamer assembles on each DNA strand where it exits the tetramer. Each RuvB hexamer is contacted by two RuvA subunits (via domain III) on 2 adjacent RuvB subunits; this complex drives branch migration. In the full resolvosome a probable DNA-RuvA(4)-RuvB(12)-RuvC(2) complex forms which resolves the HJ.

Its subcellular location is the cytoplasm. Functionally, the RuvA-RuvB-RuvC complex processes Holliday junction (HJ) DNA during genetic recombination and DNA repair, while the RuvA-RuvB complex plays an important role in the rescue of blocked DNA replication forks via replication fork reversal (RFR). RuvA specifically binds to HJ cruciform DNA, conferring on it an open structure. The RuvB hexamer acts as an ATP-dependent pump, pulling dsDNA into and through the RuvAB complex. HJ branch migration allows RuvC to scan DNA until it finds its consensus sequence, where it cleaves and resolves the cruciform DNA. This chain is Holliday junction branch migration complex subunit RuvA, found in Klebsiella pneumoniae (strain 342).